The following is a 166-amino-acid chain: NAD(P)H-quinone oxidoreductase subunit I, chloroplastic (166 aa).

4Fe-4S ferredoxin-type domains lie at 55–84 and 95–124; these read GRIH…VDWK and LNYS…MTEE. Residues Cys64, Cys67, Cys70, Cys74, Cys104, Cys107, Cys110, and Cys114 each contribute to the [4Fe-4S] cluster site.

Belongs to the complex I 23 kDa subunit family. As to quaternary structure, NDH is composed of at least 16 different subunits, 5 of which are encoded in the nucleus. It depends on [4Fe-4S] cluster as a cofactor.

The protein resides in the plastid. The protein localises to the chloroplast thylakoid membrane. It catalyses the reaction a plastoquinone + NADH + (n+1) H(+)(in) = a plastoquinol + NAD(+) + n H(+)(out). The catalysed reaction is a plastoquinone + NADPH + (n+1) H(+)(in) = a plastoquinol + NADP(+) + n H(+)(out). In terms of biological role, NDH shuttles electrons from NAD(P)H:plastoquinone, via FMN and iron-sulfur (Fe-S) centers, to quinones in the photosynthetic chain and possibly in a chloroplast respiratory chain. The immediate electron acceptor for the enzyme in this species is believed to be plastoquinone. Couples the redox reaction to proton translocation, and thus conserves the redox energy in a proton gradient. The polypeptide is NAD(P)H-quinone oxidoreductase subunit I, chloroplastic (Perymeniopsis ovalifolia).